The chain runs to 858 residues: Ubiquitin carboxyl-terminal hydrolase 13 (858 aa).

Residue Ser-112 is modified to Phosphoserine. The UBP-type; degenerate zinc finger occupies 185–293 (PVSKYANNLV…KHLAHFGIDM (109 aa)). The Zn(2+) site is built by Cys-209, Cys-212, Cys-229, and His-242. Lys-309 is covalently cross-linked (Glycyl lysine isopeptide (Lys-Gly) (interchain with G-Cter in SUMO2)). The region spanning 334–856 (TGLKNLGNSC…LGYMYFYRRI (523 aa)) is the USP domain. Residue Cys-343 is the Nucleophile of the active site. Lys-403 participates in a covalent cross-link: Glycyl lysine isopeptide (Lys-Gly) (interchain with G-Cter in SUMO2). 2 UBA domains span residues 650–691 (DIDE…IIVH) and 722–762 (QPPE…IFSH). The Proton acceptor role is filled by His-818.

The protein belongs to the peptidase C19 family. Interacts with UFD1. Interacts (via UBA domains) with SIAH2 (when ubiquitinated). Interacts with BAG6; the interaction is direct and may mediate UBL4A deubiquitination. Interacts (via UBA 2 domain) with AMFR; the interaction is direct. Interacts with UBL4A; may be indirect via BAG6. Interacts with NEDD4.

The protein resides in the cytoplasm. The catalysed reaction is Thiol-dependent hydrolysis of ester, thioester, amide, peptide and isopeptide bonds formed by the C-terminal Gly of ubiquitin (a 76-residue protein attached to proteins as an intracellular targeting signal).. Specifically inhibited by spautin-1 (specific and potent autophagy inhibitor-1), a derivative of MBCQ that binds to USP13 and inhibits deubiquitinase activity. Regulated by PIK3C3/VPS34-containing complexes. The weak deubiquitinase activity in vitro suggests the existence of some mechanism that activates the enzyme. In terms of biological role, deubiquitinase that mediates deubiquitination of target proteins such as BECN1, MITF, SKP2 and USP10 and is involved in various processes such as autophagy, endoplasmic reticulum-associated degradation (ERAD), cell cycle progression or DNA damage response. Component of a regulatory loop that controls autophagy and p53/TP53 levels: mediates deubiquitination of BECN1, a key regulator of autophagy, leading to stabilize the PIK3C3/VPS34-containing complexes. Alternatively, forms with NEDD4 a deubiquitination complex, which subsequently stabilizes VPS34 to promote autophagy. Also deubiquitinates USP10, an essential regulator of p53/TP53 stability. In turn, PIK3C3/VPS34-containing complexes regulate USP13 stability, suggesting the existence of a regulatory system by which PIK3C3/VPS34-containing complexes regulate p53/TP53 protein levels via USP10 and USP13. Recruited by nuclear UFD1 and mediates deubiquitination of SKP2, thereby regulating endoplasmic reticulum-associated degradation (ERAD). Also regulates ERAD through the deubiquitination of UBL4A a component of the BAG6/BAT3 complex. Mediates stabilization of SIAH2 independently of deubiquitinase activity: binds ubiquitinated SIAH2 and acts by impairing SIAH2 autoubiquitination. Regulates the cell cycle progression by stabilizing cell cycle proteins such as SKP2 and AURKB. In addition, plays an important role in maintaining genomic stability and in DNA replication checkpoint activation via regulation of RAP80 and TOPBP1. Deubiquitinates the multifunctional protein HMGB1 and subsequently drives its nucleocytoplasmic localization and its secretion. Positively regulates type I and type II interferon signalings by deubiquitinating STAT1 but negatively regulates antiviral response by deubiquitinating STING1. In Mus musculus (Mouse), this protein is Ubiquitin carboxyl-terminal hydrolase 13 (Usp13).